Consider the following 283-residue polypeptide: Bifunctional protein FolD (283 aa).

Residues 165–167, Ser-190, and Ile-231 each bind NADP(+); that span reads GRS.

Belongs to the tetrahydrofolate dehydrogenase/cyclohydrolase family. In terms of assembly, homodimer.

It carries out the reaction (6R)-5,10-methylene-5,6,7,8-tetrahydrofolate + NADP(+) = (6R)-5,10-methenyltetrahydrofolate + NADPH. It catalyses the reaction (6R)-5,10-methenyltetrahydrofolate + H2O = (6R)-10-formyltetrahydrofolate + H(+). Its pathway is one-carbon metabolism; tetrahydrofolate interconversion. Catalyzes the oxidation of 5,10-methylenetetrahydrofolate to 5,10-methenyltetrahydrofolate and then the hydrolysis of 5,10-methenyltetrahydrofolate to 10-formyltetrahydrofolate. This chain is Bifunctional protein FolD, found in Janthinobacterium sp. (strain Marseille) (Minibacterium massiliensis).